The chain runs to 199 residues: Recombination protein RecR (199 aa).

A C4-type zinc finger spans residues 58–73 (CKKCFNFTSEDECEIC). A Toprim domain is found at 81–175 (KLICVVAETK…KVTRIAYGLP (95 aa)).

This sequence belongs to the RecR family.

Its function is as follows. May play a role in DNA repair. It seems to be involved in an RecBC-independent recombinational process of DNA repair. It may act with RecF and RecO. This is Recombination protein RecR from Prochlorococcus marinus (strain MIT 9312).